Reading from the N-terminus, the 130-residue chain is Small ribosomal subunit protein uS11 (130 aa).

The protein belongs to the universal ribosomal protein uS11 family. In terms of assembly, part of the 30S ribosomal subunit.

Functionally, located on the platform of the 30S subunit. This chain is Small ribosomal subunit protein uS11, found in Ignicoccus hospitalis (strain KIN4/I / DSM 18386 / JCM 14125).